A 261-amino-acid chain; its full sequence is Ribosomal RNA small subunit methyltransferase J (261 aa).

Residues Arg-101 to Asp-102, Glu-117 to Arg-118, Ser-153 to Ser-154, and Asp-176 contribute to the S-adenosyl-L-methionine site.

This sequence belongs to the methyltransferase superfamily. RsmJ family.

The protein localises to the cytoplasm. It carries out the reaction guanosine(1516) in 16S rRNA + S-adenosyl-L-methionine = N(2)-methylguanosine(1516) in 16S rRNA + S-adenosyl-L-homocysteine + H(+). In terms of biological role, specifically methylates the guanosine in position 1516 of 16S rRNA. The chain is Ribosomal RNA small subunit methyltransferase J from Vibrio cholerae serotype O1 (strain ATCC 39315 / El Tor Inaba N16961).